The chain runs to 444 residues: Cop9 signalosome complex subunit 11 (444 aa).

Residues 195–367 (FFTMMTSEPL…IHFEDSSILQ (173 aa)) form the PCI domain. The segment at 419 to 439 (SSDDMDIDEVNDRSDISDSEG) is disordered.

Component of a COP9 signalosome-like (CSN) complex, composed of RRI1/CSN5, CSN9, RRI2/CSN10, PCI8/CSN11, CSN12 and CSI1. Interacts with PRT1 and RPG1, 2 subunits of the core complex of translation initiation factor 3 (eIF3).

Its subcellular location is the cytoplasm. It is found in the nucleus. Functionally, component of the COP9 signalosome (CSN) complex that acts as an regulator of the ubiquitin (Ubl) conjugation pathway by mediating the deneddylation of the cullin subunit of SCF-type E3 ubiquitin-protein ligase complexes The CSN complex is involved in the regulation of the mating pheromone response. PCI8 may also be involved in transcriptional and translational control. The chain is Cop9 signalosome complex subunit 11 (PCI8) from Saccharomyces cerevisiae (strain ATCC 204508 / S288c) (Baker's yeast).